Here is a 180-residue protein sequence, read N- to C-terminus: Putative adenylate kinase (180 aa).

Positions 10, 12, 13, 14, and 15 each coordinate ATP. Residues 30 to 50 (SVKELALSRGIGERVSDEIEI) form an NMP region. The tract at residues 99–109 (ARGYSKKKLAE) is LID. Positions 100 and 138 each coordinate ATP.

It belongs to the adenylate kinase family. AK6 subfamily. Interacts with uS11. Not a structural component of 40S pre-ribosomes, but transiently interacts with them by binding to uS11.

The enzyme catalyses AMP + ATP = 2 ADP. It carries out the reaction ATP + H2O = ADP + phosphate + H(+). In terms of biological role, broad-specificity nucleoside monophosphate (NMP) kinase that catalyzes the reversible transfer of the terminal phosphate group between nucleoside triphosphates and monophosphates. Also has ATPase activity. Involved in the late maturation steps of the 30S ribosomal particles, specifically 16S rRNA maturation. While NMP activity is not required for ribosome maturation, ATPase activity is. Associates transiently with small ribosomal subunit protein uS11. ATP hydrolysis breaks the interaction with uS11. May temporarily remove uS11 from the ribosome to enable a conformational change of the ribosomal RNA that is needed for the final maturation step of the small ribosomal subunit. The protein is Putative adenylate kinase of Thermococcus onnurineus (strain NA1).